The primary structure comprises 244 residues: RAD51-like protein 1 (244 aa).

Interacts with brc-2 and rad-51.

The protein localises to the nucleus. Has a role in the homologous recombination repair (HRR) of genomic DNA during meiosis. Required for rad-51 recruitment onto ssDNA gaps generated at stalled replication fork barriers. The chain is RAD51-like protein 1 from Caenorhabditis briggsae.